We begin with the raw amino-acid sequence, 1122 residues long: RecBCD enzyme subunit RecC (1122 aa).

The protein belongs to the RecC family. As to quaternary structure, heterotrimer of RecB, RecC and RecD. All subunits contribute to DNA-binding. Interacts with YgbT (Cas1). (Microbial infection) Lambda virus GamS protein interacts with the enzyme without displacing any of the subunits.

Its activity is regulated as follows. After reacting with DNA bearing a Chi site the holoenzyme is disassembled and loses exonuclease activity, DNA unwinding and Chi-directed DNA cleavage; RecB remains complexed with ssDNA, which may prevent holoenzyme reassembly. High levels of Mg(2+) (13 mM MgCl(2+)) or incubation with DNase allow holoenzyme reassembly, suggesting it is DNA bound to RecB that prevents reassembly. With respect to regulation, (Microbial infection) RecBCD is inhibited by the lambda virus gam protein (both GamL and GamS isoforms); in vitro a short preincubation prior to adding DNA results in maximal inhibition. Its function is as follows. A helicase/nuclease that prepares dsDNA breaks (DSB) for recombinational DNA repair. Binds to DSBs and unwinds DNA via a rapid (&gt;1 kb/second) and highly processive (&gt;30 kb) ATP-dependent bidirectional helicase. Unwinds dsDNA until it encounters a Chi (crossover hotspot instigator, 5'-GCTGGTGG-3') sequence from the 3' direction. Cuts ssDNA a few nucleotides 3' to Chi site, by nicking one strand or switching the strand degraded (depending on the reaction conditions). The properties and activities of the enzyme are changed at Chi. The Chi-altered holoenzyme produces a long 3'-ssDNA overhang which facilitates RecA-binding to the ssDNA for homologous DNA recombination and repair. Holoenzyme degrades any linearized DNA that is unable to undergo homologous recombination. In the holoenzyme this subunit almost certainly recognizes the wild-type Chi sequence, when added to isolated RecB increases its ATP-dependent helicase processivity. The RecBC complex requires the RecD subunit for nuclease activity, but can translocate along ssDNA in both directions. The RecBCD complex does not unwind G-quadruplex DNA. In Escherichia coli (strain K12), this protein is RecBCD enzyme subunit RecC.